The primary structure comprises 120 residues: Large ribosomal subunit protein uL18 (120 aa).

Belongs to the universal ribosomal protein uL18 family. Part of the 50S ribosomal subunit; part of the 5S rRNA/L5/L18/L25 subcomplex. Contacts the 5S and 23S rRNAs.

This is one of the proteins that bind and probably mediate the attachment of the 5S RNA into the large ribosomal subunit, where it forms part of the central protuberance. The protein is Large ribosomal subunit protein uL18 of Staphylococcus saprophyticus subsp. saprophyticus (strain ATCC 15305 / DSM 20229 / NCIMB 8711 / NCTC 7292 / S-41).